The following is a 703-amino-acid chain: MAAATGDPGLSKLQFAPFSSALDVGFWHELTQKKLNEYRLDEAPKDIKGYYYNGDSAGLPARLTLEFSAFDMSAPTPARCCPAIGTLYNTNTLESFKTADKKLLLEQAANEIWESIKSGTALENPVLLNKFLLLTFADLKKYHFYYWFCYPALCLPESLPLIQGPVGLDQRFSLKQIEALECAYDNLCQTEGVTALPYFLIKYDENMVLVSLLKHYSDFFQGQRTKITIGVYDPCNLAQYPGWPLRNFLVLAAHRWSSSFQSVEVVCFRDRTMQGARDVAHSIIFEVKLPEMAFSPDCPKAVGWEKNQKGGMGPRMVNLSECMDPKRLAESSVDLNLKLMCWRLVPTLDLDKVVSVKCLLLGAGTLGCNVARTLMGWGVRHITFVDNAKISYSNPVRQPLYEFEDCLGGGKPKALAAADRLQKIFPGVNARGFNMSIPMPGHPVNFSSVTLEQARRDVEQLEQLIESHDVVFLLMDTRESRWLPAVIAASKRKLVINAALGFDTFVVMRHGLKKPKQQGAGDLCPNHPVASADLLGSSLFANIPGYKLGCYFCNDVVAPGDSTRDRTLDQQCTVSRPGLAVIAGALAVELMVSVLQHPEGGYAIASSSDDRMNEPPTSLGLVPHQIRGFLSRFDNVLPVSLAFDKCTACSSKVLDQYEREGFNFLAKVFNSSHSFLEDLTGLTLLHQETQAAEIWDMSDDETI.

Ala-2 carries the post-translational modification N-acetylalanine. The short motif at 15-17 (FAP) is the FAP motif element. Residue Lys-45 forms a Glycyl lysine isopeptide (Lys-Gly) (interchain with G-Cter in ubiquitin) linkage. The active-site Glycyl thioester intermediate is Cys-572. Ser-698 carries the phosphoserine modification.

It belongs to the ATG7 family. In terms of assembly, homodimer. Interacts with ATG3; this interaction is essential for the transfer of ATG8-like proteins's thioester from ATG7 to ATG3 and plays a role in the conjugation of ATG12 to ATG5. Interacts with ATG12. Forms intermediate conjugates with GABARAPL1. Forms intermediate conjugates with ATG8-like proteins such as GABARAP, GABARAPL2 or MAP1LC3A. Interacts with EP300 acetyltransferase. Interacts with FOXO1. Acetylated by EP300. In terms of processing, polyubiquitinated on Lys-45 via 'Lys-63'-linked ubiquitin by TRIM32; this modification positiely regulates ATG8 and ATG12 activating enzyme activity leading to initiation of autophagy under metabolic stress. As to expression, widely expressed, especially in kidney, liver, lymph nodes and bone marrow.

The protein localises to the cytoplasm. Its subcellular location is the preautophagosomal structure. Its function is as follows. E1-like activating enzyme involved in the 2 ubiquitin-like systems required for cytoplasm to vacuole transport (Cvt) and autophagy. Activates ATG12 for its conjugation with ATG5 as well as the ATG8 family proteins for their conjugation with phosphatidylethanolamine. Both systems are needed for the ATG8 association to Cvt vesicles and autophagosomes membranes. Required for autophagic death induced by caspase-8 inhibition. Facilitates LC3-I lipidation with phosphatidylethanolamine to form LC3-II which is found on autophagosomal membranes. Required for mitophagy which contributes to regulate mitochondrial quantity and quality by eliminating the mitochondria to a basal level to fulfill cellular energy requirements and preventing excess ROS production. Modulates p53/TP53 activity to regulate cell cycle and survival during metabolic stress. Also plays a key role in the maintenance of axonal homeostasis, the prevention of axonal degeneration, the maintenance of hematopoietic stem cells, the formation of Paneth cell granules, as well as in adipose differentiation. Plays a role in regulating the liver clock and glucose metabolism by mediating the autophagic degradation of CRY1 (clock repressor) in a time-dependent manner. The protein is Ubiquitin-like modifier-activating enzyme ATG7 of Homo sapiens (Human).